A 217-amino-acid polypeptide reads, in one-letter code: Ribosomal RNA small subunit methyltransferase G (217 aa).

S-adenosyl-L-methionine is bound by residues G78, F83, 129–130 (GE), and R146.

The protein belongs to the methyltransferase superfamily. RNA methyltransferase RsmG family.

Its subcellular location is the cytoplasm. The enzyme catalyses guanosine(527) in 16S rRNA + S-adenosyl-L-methionine = N(7)-methylguanosine(527) in 16S rRNA + S-adenosyl-L-homocysteine. Its function is as follows. Specifically methylates the N7 position of guanine in position 527 of 16S rRNA. This is Ribosomal RNA small subunit methyltransferase G from Geobacter sulfurreducens (strain ATCC 51573 / DSM 12127 / PCA).